Here is a 208-residue protein sequence, read N- to C-terminus: Ras-related protein Rab-6A (208 aa).

Residue Ser-2 is modified to N-acetylserine. Residues Ser-23, Val-24, Gly-25, Lys-26, Thr-27, Ser-28, Asp-39, Asn-40, Tyr-42, and Thr-45 each coordinate GTP. Thr-27 contributes to the Mg(2+) binding site. Positions 32-50 match the Switch 1 motif; it reads RFMYDSFDNTYQATIGIDF. Residues Thr-45 and Asp-68 each coordinate Mg(2+). A Switch 2 motif is present at residues 69–88; the sequence is TAGQERFRSLIPSYIRDSAA. GTP-binding residues include Gly-71, Asn-126, Lys-127, Asp-129, Ser-156, Ala-157, and Lys-158. S-geranylgeranyl cysteine attachment occurs at residues Cys-206 and Cys-208. Cys-208 bears the Cysteine methyl ester mark.

This sequence belongs to the small GTPase superfamily. Rab family. It depends on Mg(2+) as a cofactor.

It localises to the golgi apparatus membrane. It catalyses the reaction GTP + H2O = GDP + phosphate + H(+). Regulated by guanine nucleotide exchange factors (GEFs) which promote the exchange of bound GDP for free GTP. Regulated by GTPase activating proteins (GAPs) which increase the GTP hydrolysis activity. Inhibited by GDP dissociation inhibitors (GDIs). Functionally, the small GTPases Rab are key regulators of intracellular membrane trafficking, from the formation of transport vesicles to their fusion with membranes. Rabs cycle between an inactive GDP-bound form and an active GTP-bound form that is able to recruit to membranes different sets of downstream effectors directly responsible for vesicle formation, movement, tethering and fusion. RAB6A acts as a regulator of COPI-independent retrograde transport from the Golgi apparatus towards the endoplasmic reticulum (ER). The sequence is that of Ras-related protein Rab-6A (RAB6A) from Gallus gallus (Chicken).